The following is a 364-amino-acid chain: Spermidine/putrescine import ATP-binding protein PotA (364 aa).

Residues 10–244 (IEVVNVSKIF…PAERFVADFI (235 aa)) form the ABC transporter domain. Residue 46–53 (GPSGCGKT) participates in ATP binding.

It belongs to the ABC transporter superfamily. Spermidine/putrescine importer (TC 3.A.1.11.1) family. As to quaternary structure, the complex is composed of two ATP-binding proteins (PotA), two transmembrane proteins (PotB and PotC) and a solute-binding protein (PotD).

It is found in the cell inner membrane. It carries out the reaction ATP + H2O + polyamine-[polyamine-binding protein]Side 1 = ADP + phosphate + polyamineSide 2 + [polyamine-binding protein]Side 1.. Functionally, part of the ABC transporter complex PotABCD involved in spermidine/putrescine import. Responsible for energy coupling to the transport system. The protein is Spermidine/putrescine import ATP-binding protein PotA of Mesorhizobium japonicum (strain LMG 29417 / CECT 9101 / MAFF 303099) (Mesorhizobium loti (strain MAFF 303099)).